We begin with the raw amino-acid sequence, 78 residues long: Protein SlyX homolog (78 aa).

Belongs to the SlyX family.

In Xanthomonas axonopodis pv. citri (strain 306), this protein is Protein SlyX homolog.